The sequence spans 406 residues: Imidazolonepropionase (406 aa).

Fe(3+)-binding residues include H75 and H77. Zn(2+) is bound by residues H75 and H77. Residues R84, Y147, and H180 each coordinate 4-imidazolone-5-propanoate. Y147 lines the N-formimidoyl-L-glutamate pocket. Fe(3+) is bound at residue H245. H245 serves as a coordination point for Zn(2+). Q248 serves as a coordination point for 4-imidazolone-5-propanoate. Position 320 (D320) interacts with Fe(3+). Residue D320 participates in Zn(2+) binding. N322 and G324 together coordinate N-formimidoyl-L-glutamate. A 4-imidazolone-5-propanoate-binding site is contributed by T325.

This sequence belongs to the metallo-dependent hydrolases superfamily. HutI family. Zn(2+) is required as a cofactor. Requires Fe(3+) as cofactor.

The protein resides in the cytoplasm. The enzyme catalyses 4-imidazolone-5-propanoate + H2O = N-formimidoyl-L-glutamate. It participates in amino-acid degradation; L-histidine degradation into L-glutamate; N-formimidoyl-L-glutamate from L-histidine: step 3/3. Functionally, catalyzes the hydrolytic cleavage of the carbon-nitrogen bond in imidazolone-5-propanoate to yield N-formimidoyl-L-glutamate. It is the third step in the universal histidine degradation pathway. This chain is Imidazolonepropionase, found in Hyphomonas neptunium (strain ATCC 15444).